Reading from the N-terminus, the 844-residue chain is Meiotically up-regulated gene 61 protein (844 aa).

Disordered regions lie at residues Glu-333–Gln-354 and Asn-384–Ser-415. A compositionally biased stretch (polar residues) spans Asn-384 to Thr-394. A compositionally biased stretch (basic and acidic residues) spans Pro-395 to Asp-407. The chain crosses the membrane as a helical span at residues Val-459–Trp-479. Residue Ala-605–Ser-612 coordinates ATP. Residues Val-705–Val-725 form a helical membrane-spanning segment.

Interacts with sad1.

The protein resides in the endoplasmic reticulum membrane. It localises to the nucleus membrane. In terms of biological role, required for correct meiotic chromosome segregation. In Schizosaccharomyces pombe (strain 972 / ATCC 24843) (Fission yeast), this protein is Meiotically up-regulated gene 61 protein (mug61).